Consider the following 91-residue polypeptide: MARICLHAYVGGRVQGVGFRQSTRDEAERLGLDGWVRNLEDGRVEVLWEGEEEQVKALQRWLERGPRRARVAGVEVEALPLQGIAGFIVRR.

Residues 5–91 (CLHAYVGGRV…QGIAGFIVRR (87 aa)) enclose the Acylphosphatase-like domain. Catalysis depends on residues arginine 20 and asparagine 38.

It belongs to the acylphosphatase family.

It catalyses the reaction an acyl phosphate + H2O = a carboxylate + phosphate + H(+). This is Acylphosphatase (acyP) from Pseudomonas paraeruginosa (strain DSM 24068 / PA7) (Pseudomonas aeruginosa (strain PA7)).